A 193-amino-acid polypeptide reads, in one-letter code: MEKKRTLSVNSGNNELIPPQPPSSPKTKNSLNNIENNECNNNNNNNNNNNNNNSNSNNLNNSNNNNINTSSNSINSSNSINNSIDNIDNKDNHQQKYYLPPSKMNSSQEFQSYLTPNKNNNNRNNNNRNNNNNNNNNNNNEGTIQNFTSRMLNSIIMYMIRPFLVGASASFGISIGMFYFSPFPPSFLPSSPS.

Positions 1–144 are disordered; the sequence is MEKKRTLSVN…NNNNNNEGTI (144 aa). Residues 29–86 are compositionally biased toward low complexity; the sequence is NSLNNIENNECNNNNNNNNNNNNNNSNSNNLNNSNNNNINTSSNSINSSNSINNSIDN. The segment covering 103–118 has biased composition (polar residues); that stretch reads KMNSSQEFQSYLTPNK. Low complexity predominate over residues 119-140; sequence NNNNRNNNNRNNNNNNNNNNNN. The chain crosses the membrane as a helical span at residues 158–180; that stretch reads YMIRPFLVGASASFGISIGMFYF.

The protein resides in the membrane. This is an uncharacterized protein from Dictyostelium discoideum (Social amoeba).